The primary structure comprises 111 residues: MGSSSFLVLMVSLALVTLVAAEGVKVNIEKPGVCPADNIRCIKSDPPQCHTDQDCQGIRKCCYLHCGFKCVIPVKELEEGGNKDEDVSRPCPEPGWEAKPPGVFSTRCPQK.

The signal sequence occupies residues 1 to 23 (MGSSSFLVLMVSLALVTLVAAEG). The 48-residue stretch at 27 to 74 (NIEKPGVCPADNIRCIKSDPPQCHTDQDCQGIRKCCYLHCGFKCVIPV) folds into the WAP domain. Intrachain disulfides connect Cys34–Cys62, Cys41–Cys66, Cys49–Cys61, and Cys55–Cys70. The disordered stretch occupies residues 80 to 111 (GGNKDEDVSRPCPEPGWEAKPPGVFSTRCPQK).

It localises to the secreted. In terms of biological role, antibacterial protein. Putative acid-stable proteinase inhibitor. This Callithrix jacchus (White-tufted-ear marmoset) protein is WAP four-disulfide core domain protein 12 (WFDC12).